Here is a 224-residue protein sequence, read N- to C-terminus: Urease accessory protein UreF (224 aa).

Belongs to the UreF family. In terms of assembly, ureD, UreF and UreG form a complex that acts as a GTP-hydrolysis-dependent molecular chaperone, activating the urease apoprotein by helping to assemble the nickel containing metallocenter of UreC. The UreE protein probably delivers the nickel.

Its subcellular location is the cytoplasm. In terms of biological role, required for maturation of urease via the functional incorporation of the urease nickel metallocenter. The sequence is that of Urease accessory protein UreF from Methylorubrum populi (strain ATCC BAA-705 / NCIMB 13946 / BJ001) (Methylobacterium populi).